A 101-amino-acid chain; its full sequence is YcgL domain-containing protein ACIAD2309 (101 aa).

Positions 1–93 (MHCDIYRSSK…PPEGFINPSD (93 aa)) constitute a YcgL domain.

This Acinetobacter baylyi (strain ATCC 33305 / BD413 / ADP1) protein is YcgL domain-containing protein ACIAD2309.